Here is a 61-residue protein sequence, read N- to C-terminus: MAIAPITGTLKRKIITDISIGFACGFALATGYWYIEHKPLIVKREAYYAKLKAQQEAEDSA.

The Mitochondrial matrix segment spans residues 1–13 (MAIAPITGTLKRK). A helical transmembrane segment spans residues 14–36 (IITDISIGFACGFALATGYWYIE). Residues 37-56 (HKPLIVKREAYYAKLKAQQE) lie on the Mitochondrial intermembrane side of the membrane. Positions 57–61 (AEDSA) are cleaved as a propeptide — removed in mature form.

Belongs to the fungal cytochrome c oxidase subunit 7a family. In terms of assembly, component of the cytochrome c oxidase (complex IV, CIV), a multisubunit enzyme composed of a catalytic core of 3 subunits and several supernumerary subunits. The complex exists as a monomer or a dimer and forms supercomplexes (SCs) in the inner mitochondrial membrane with ubiquinol-cytochrome c oxidoreductase (cytochrome b-c1 complex, complex III, CIII).

It is found in the mitochondrion inner membrane. Its pathway is energy metabolism; oxidative phosphorylation. Functionally, component of the cytochrome c oxidase, the last enzyme in the mitochondrial electron transport chain which drives oxidative phosphorylation. The respiratory chain contains 3 multisubunit complexes succinate dehydrogenase (complex II, CII), ubiquinol-cytochrome c oxidoreductase (cytochrome b-c1 complex, complex III, CIII) and cytochrome c oxidase (complex IV, CIV), that cooperate to transfer electrons derived from NADH and succinate to molecular oxygen, creating an electrochemical gradient over the inner membrane that drives transmembrane transport and the ATP synthase. Cytochrome c oxidase is the component of the respiratory chain that catalyzes the reduction of oxygen to water. Electrons originating from reduced cytochrome c in the intermembrane space (IMS) are transferred via the dinuclear copper A center (CU(A)) of subunit 2 and heme A of subunit 1 to the active site in subunit 1, a binuclear center (BNC) formed by heme A3 and copper B (CU(B)). The BNC reduces molecular oxygen to 2 water molecules using 4 electrons from cytochrome c in the IMS and 4 protons from the mitochondrial matrix. The polypeptide is Cytochrome c oxidase subunit 9, mitochondrial (COX9) (Debaryomyces hansenii (strain ATCC 36239 / CBS 767 / BCRC 21394 / JCM 1990 / NBRC 0083 / IGC 2968) (Yeast)).